Reading from the N-terminus, the 526-residue chain is Peptide chain release factor 3 (526 aa).

One can recognise a tr-type G domain in the interval 9–277 (DKRRTFAIIS…GIVEWAPKPL (269 aa)). GTP is bound by residues 18–25 (SHPDAGKT), 86–90 (DTPGH), and 140–143 (NKLD).

This sequence belongs to the TRAFAC class translation factor GTPase superfamily. Classic translation factor GTPase family. PrfC subfamily.

It is found in the cytoplasm. Its function is as follows. Increases the formation of ribosomal termination complexes and stimulates activities of RF-1 and RF-2. It binds guanine nucleotides and has strong preference for UGA stop codons. It may interact directly with the ribosome. The stimulation of RF-1 and RF-2 is significantly reduced by GTP and GDP, but not by GMP. The chain is Peptide chain release factor 3 from Shewanella sp. (strain MR-4).